The sequence spans 553 residues: ATP synthase subunit alpha (553 aa).

Residue 173 to 180 coordinates ATP; that stretch reads GDRQTGKT. The interval 527–553 is disordered; that stretch reads EALDPSAVEREEIAVHHRKPSDETAGH. Over residues 533 to 553 the composition is skewed to basic and acidic residues; that stretch reads AVEREEIAVHHRKPSDETAGH.

The protein belongs to the ATPase alpha/beta chains family. As to quaternary structure, F-type ATPases have 2 components, CF(1) - the catalytic core - and CF(0) - the membrane proton channel. CF(1) has five subunits: alpha(3), beta(3), gamma(1), delta(1), epsilon(1). CF(0) has three main subunits: a(1), b(2) and c(9-12). The alpha and beta chains form an alternating ring which encloses part of the gamma chain. CF(1) is attached to CF(0) by a central stalk formed by the gamma and epsilon chains, while a peripheral stalk is formed by the delta and b chains.

Its subcellular location is the cell membrane. It catalyses the reaction ATP + H2O + 4 H(+)(in) = ADP + phosphate + 5 H(+)(out). Produces ATP from ADP in the presence of a proton gradient across the membrane. The alpha chain is a regulatory subunit. In Parafrankia sp. (strain EAN1pec), this protein is ATP synthase subunit alpha.